The following is a 369-amino-acid chain: 4-hydroxyproline betaine 2-epimerase (369 aa).

Substrate-binding residues include Y56 and Q162. Catalysis depends on K164, which acts as the Proton donor/acceptor. Residues D194, E219, and D242 each coordinate Mg(2+). K266 functions as the Proton donor/acceptor in the catalytic mechanism. A295 contacts substrate.

This sequence belongs to the mandelate racemase/muconate lactonizing enzyme family. Mg(2+) is required as a cofactor.

It carries out the reaction trans-4-hydroxy-L-proline betaine = cis-4-hydroxy-D-proline betaine. The enzyme catalyses L-proline betaine = D-proline betaine. In terms of biological role, catalyzes the 2-epimerization of trans-4-hydroxy-L-proline betaine (tHyp-B) to cis-4-hydroxy-D-proline betaine (cHyp-B). Is involved in a catabolic pathway that degrades tHyp-B to alpha-ketoglutarate. This pathway would permit the utilization of tHyp-B as a carbon and nitrogen source in the absence of osmotic stress, since tHyp-B functions as an osmolyte and is not catabolized when it is needed as osmoprotectant. Can also catalyze the racemization of L-proline betaine. This chain is 4-hydroxyproline betaine 2-epimerase (hpbD), found in Paracoccus denitrificans (strain Pd 1222).